Here is a 156-residue protein sequence, read N- to C-terminus: Small ribosomal subunit protein uS7 (156 aa).

It belongs to the universal ribosomal protein uS7 family. As to quaternary structure, part of the 30S ribosomal subunit. Contacts proteins S9 and S11.

Its function is as follows. One of the primary rRNA binding proteins, it binds directly to 16S rRNA where it nucleates assembly of the head domain of the 30S subunit. Is located at the subunit interface close to the decoding center, probably blocks exit of the E-site tRNA. In Alcanivorax borkumensis (strain ATCC 700651 / DSM 11573 / NCIMB 13689 / SK2), this protein is Small ribosomal subunit protein uS7.